The following is a 327-amino-acid chain: Undecaprenyl-phosphate 4-deoxy-4-formamido-L-arabinose transferase (327 aa).

2 helical membrane-spanning segments follow: residues 236–256 (LSLV…LLVV) and 270–290 (VFTL…GMGL).

The protein belongs to the glycosyltransferase 2 family.

Its subcellular location is the cell inner membrane. The enzyme catalyses UDP-4-deoxy-4-formamido-beta-L-arabinose + di-trans,octa-cis-undecaprenyl phosphate = 4-deoxy-4-formamido-alpha-L-arabinopyranosyl di-trans,octa-cis-undecaprenyl phosphate + UDP. Its pathway is glycolipid biosynthesis; 4-amino-4-deoxy-alpha-L-arabinose undecaprenyl phosphate biosynthesis; 4-amino-4-deoxy-alpha-L-arabinose undecaprenyl phosphate from UDP-4-deoxy-4-formamido-beta-L-arabinose and undecaprenyl phosphate: step 1/2. It functions in the pathway bacterial outer membrane biogenesis; lipopolysaccharide biosynthesis. Its function is as follows. Catalyzes the transfer of 4-deoxy-4-formamido-L-arabinose from UDP to undecaprenyl phosphate. The modified arabinose is attached to lipid A and is required for resistance to polymyxin and cationic antimicrobial peptides. This chain is Undecaprenyl-phosphate 4-deoxy-4-formamido-L-arabinose transferase, found in Yersinia enterocolitica serotype O:8 / biotype 1B (strain NCTC 13174 / 8081).